The chain runs to 160 residues: Phosphopantetheine adenylyltransferase (160 aa).

Thr-10 provides a ligand contact to substrate. ATP is bound by residues 10–11 (TF) and His-18. Residues Lys-42, Leu-74, and Arg-88 each coordinate substrate. ATP contacts are provided by residues 89–91 (GLR), Glu-99, and 124–130 (NSFISST).

It belongs to the bacterial CoaD family. In terms of assembly, homohexamer. Mg(2+) serves as cofactor.

The protein resides in the cytoplasm. The enzyme catalyses (R)-4'-phosphopantetheine + ATP + H(+) = 3'-dephospho-CoA + diphosphate. It participates in cofactor biosynthesis; coenzyme A biosynthesis; CoA from (R)-pantothenate: step 4/5. Functionally, reversibly transfers an adenylyl group from ATP to 4'-phosphopantetheine, yielding dephospho-CoA (dPCoA) and pyrophosphate. This Photobacterium damsela subsp. piscicida (Pasteurella piscicida) protein is Phosphopantetheine adenylyltransferase.